The chain runs to 561 residues: Potassium-transporting ATPase potassium-binding subunit (561 aa).

The next 12 membrane-spanning stretches (helical) occupy residues 5–25, 60–80, 86–106, 131–151, 177–197, 247–267, 281–301, 324–344, 376–396, 415–435, 488–508, and 537–557; these read LAAGLQVVFVLAVLAVAYVPV, YGYAGSVLGFSAASVLFLYAL, VLPLSGDLSGVSPAVAFNTAV, GLAVQNFVSAAVGMAVAVALI, ILLPFSFVIALILLSQGVIQS, PTPVSNIVEILAILLIPVSLT, LTLLAVMGILWGSLLAVTLAA, FGIPGTALFAVSTTGTSTGAV, GLYGILVLALIAVFVGGLLVG, ALSVLVMPALVLIGTGITVIL, ALGLCMLFGRFLPIIFVLALA, and GTVVLVAALTFFPALALGPIA.

The protein belongs to the KdpA family. The system is composed of three essential subunits: KdpA, KdpB and KdpC.

The protein localises to the cell membrane. Its function is as follows. Part of the high-affinity ATP-driven potassium transport (or Kdp) system, which catalyzes the hydrolysis of ATP coupled with the electrogenic transport of potassium into the cytoplasm. This subunit binds the extracellular potassium ions and delivers the ions to the membrane domain of KdpB through an intramembrane tunnel. This is Potassium-transporting ATPase potassium-binding subunit from Rhodococcus opacus (strain B4).